Here is a 482-residue protein sequence, read N- to C-terminus: Cis-aconitate decarboxylase-like protein oryM (482 aa).

This sequence belongs to the PrpD family.

Its pathway is secondary metabolite biosynthesis. In terms of biological role, cis-aconitate decarboxylase-like protein; part of the gene cluster that mediates the biosynthesis of oryzines, natural products with an unusual maleidride backbone. The two subunits of the fungal fatty acid synthase oryfasA and oryfasB probably form octenoic acid. This fatty acid is most likely activated by the acyl-CoA ligase oryP to give octenyl-CoA before the citrate synthase-like protein oryE catalyzes condensation with oxaloacetate to form tricarboxylic acid. The next steps of the pathways are conjectural, but a favorite possible route has been proposed, beginning with decarboxylation and concomitant dehydration by the decarboxylase oryM, followed by tautomerization, which may lead to the production of a diene intermediate. Reduction of this diene intermediate could give the known metabolite piliformic acid. On the pathway to oryzine B and oryzine A, however, hydroxylation of the diene by the alpha-ketoglutarate-dependent dioxygenase oryG and lactonisation by the lactonohydrolases oryH or oryL could give oryzine B directly. Finally, enoyl reduction by the dehydrogenase oryD would then convert oryzine B into oryzine A. This chain is Cis-aconitate decarboxylase-like protein oryM, found in Aspergillus oryzae (strain ATCC 42149 / RIB 40) (Yellow koji mold).